The following is a 148-amino-acid chain: Aspartate carbamoyltransferase regulatory chain (148 aa).

4 residues coordinate Zn(2+): Cys-106, Cys-111, Cys-134, and Cys-137.

This sequence belongs to the PyrI family. Contains catalytic and regulatory chains. The cofactor is Zn(2+).

In terms of biological role, involved in allosteric regulation of aspartate carbamoyltransferase. This is Aspartate carbamoyltransferase regulatory chain from Methanococcus maripaludis (strain DSM 14266 / JCM 13030 / NBRC 101832 / S2 / LL).